We begin with the raw amino-acid sequence, 269 residues long: Mitochondrial acidic protein mam33 (269 aa).

This sequence belongs to the MAM33 family.

Its subcellular location is the cytoplasm. It localises to the mitochondrion matrix. This Schizosaccharomyces pombe (strain 972 / ATCC 24843) (Fission yeast) protein is Mitochondrial acidic protein mam33.